Reading from the N-terminus, the 221-residue chain is Large ribosomal subunit protein uL16A (221 aa).

This sequence belongs to the universal ribosomal protein uL16 family. Component of the large ribosomal subunit (LSU). Mature yeast ribosomes consist of a small (40S) and a large (60S) subunit. The 40S small subunit contains 1 molecule of ribosomal RNA (18S rRNA) and at least 33 different proteins. The large 60S subunit contains 3 rRNA molecules (25S, 5.8S and 5S rRNA) and at least 46 different proteins.

It localises to the cytoplasm. Its function is as follows. Component of the ribosome, a large ribonucleoprotein complex responsible for the synthesis of proteins in the cell. The small ribosomal subunit (SSU) binds messenger RNAs (mRNAs) and translates the encoded message by selecting cognate aminoacyl-transfer RNA (tRNA) molecules. The large subunit (LSU) contains the ribosomal catalytic site termed the peptidyl transferase center (PTC), which catalyzes the formation of peptide bonds, thereby polymerizing the amino acids delivered by tRNAs into a polypeptide chain. The nascent polypeptides leave the ribosome through a tunnel in the LSU and interact with protein factors that function in enzymatic processing, targeting, and the membrane insertion of nascent chains at the exit of the ribosomal tunnel. This Schizosaccharomyces pombe (strain 972 / ATCC 24843) (Fission yeast) protein is Large ribosomal subunit protein uL16A (rpl1001).